The primary structure comprises 426 residues: Serine--tRNA ligase (426 aa).

233 to 235 is a binding site for L-serine; sequence TAE. Residue 264-266 participates in ATP binding; the sequence is RSE. Residue Glu-287 participates in L-serine binding. Residue 351-354 participates in ATP binding; it reads EISS. Ser-387 contacts L-serine.

This sequence belongs to the class-II aminoacyl-tRNA synthetase family. Type-1 seryl-tRNA synthetase subfamily. In terms of assembly, homodimer. The tRNA molecule binds across the dimer.

Its subcellular location is the cytoplasm. The enzyme catalyses tRNA(Ser) + L-serine + ATP = L-seryl-tRNA(Ser) + AMP + diphosphate + H(+). It catalyses the reaction tRNA(Sec) + L-serine + ATP = L-seryl-tRNA(Sec) + AMP + diphosphate + H(+). It functions in the pathway aminoacyl-tRNA biosynthesis; selenocysteinyl-tRNA(Sec) biosynthesis; L-seryl-tRNA(Sec) from L-serine and tRNA(Sec): step 1/1. In terms of biological role, catalyzes the attachment of serine to tRNA(Ser). Is also able to aminoacylate tRNA(Sec) with serine, to form the misacylated tRNA L-seryl-tRNA(Sec), which will be further converted into selenocysteinyl-tRNA(Sec). This Pseudomonas putida (strain ATCC 47054 / DSM 6125 / CFBP 8728 / NCIMB 11950 / KT2440) protein is Serine--tRNA ligase.